Consider the following 711-residue polypeptide: RB-associated KRAB zinc finger protein (711 aa).

Residues 8–79 enclose the KRAB domain; the sequence is LSFKDVAVAF…EGDRHAQRHL (72 aa). Residues Lys97 and Lys256 each participate in a glycyl lysine isopeptide (Lys-Gly) (interchain with G-Cter in SUMO2) cross-link. The tract at residues 170–257 is required for interaction with RB1; that stretch reads AYGESLEDFN…YPRSQMELKP (88 aa). C2H2-type zinc fingers lie at residues 258–280 and 286–308; these read FECT…QRAH and YACS…RRSH. Lys312 is covalently cross-linked (Glycyl lysine isopeptide (Lys-Gly) (interchain with G-Cter in SUMO2)). 6 C2H2-type zinc fingers span residues 314 to 336, 342 to 364, 370 to 392, 398 to 420, 426 to 448, and 454 to 476; these read YKCN…QRTH, YECS…QRNH, YPCN…QRTH, YQCS…YRSH, and YECT…WKVH. Lys354 is covalently cross-linked (Glycyl lysine isopeptide (Lys-Gly) (interchain with G-Cter in SUMO2)). Positions 414–711 are interaction with AR; the sequence is ITHQRTHTGE…TVNVLTVEKL (298 aa). The segment at 508-530 adopts a C2H2-type 9; degenerate zinc-finger fold; that stretch reads YECNECGKTFLDSSAFHRHQSVP. Lys534 participates in a covalent cross-link: Glycyl lysine isopeptide (Lys-Gly) (interchain with G-Cter in SUMO2). C2H2-type zinc fingers lie at residues 536 to 558, 564 to 586, 592 to 614, 620 to 642, 648 to 670, and 676 to 698; these read YECN…YRGH, FGCS…QRVH, YECY…HRIH, YECS…YRSH, YECN…YRTH, and YECN…QRIH.

It belongs to the krueppel C2H2-type zinc-finger protein family. Interacts with AR. May also interact with other nuclear hormone receptors such as NR3C1/GR. Interacts with RB1.

Its subcellular location is the nucleus. Functionally, may repress E2F-dependent transcription. May promote AR-dependent transcription. This is RB-associated KRAB zinc finger protein (Rbak) from Mus musculus (Mouse).